Here is a 268-residue protein sequence, read N- to C-terminus: Putative carbamate hydrolase RutD (268 aa).

Residues V24–G243 form the AB hydrolase-1 domain.

It belongs to the AB hydrolase superfamily. Hydrolase RutD family.

The enzyme catalyses carbamate + 2 H(+) = NH4(+) + CO2. In terms of biological role, involved in pyrimidine catabolism. May facilitate the hydrolysis of carbamate, a reaction that can also occur spontaneously. This chain is Putative carbamate hydrolase RutD, found in Caulobacter sp. (strain K31).